The chain runs to 715 residues: DNA mismatch repair protein MLH3 (715 aa).

The protein belongs to the DNA mismatch repair MutL/HexB family. As to quaternary structure, heterodimer of MLH1 and MLH3, called MutLbeta, which is involved in correction of a specific subset of IDLs when associated with MutSbeta. Forms a ternary complex with a SGS1-TOP3 heterodimer during meiosis.

The protein resides in the nucleus. Its function is as follows. Involved in DNA mismatch repair (MMR), correcting insertion-deletion loops (IDLs) resulting from DNA replication, DNA damage or from recombination events between non-identical sequences during meiosis. Component of the MutLbeta heterodimer, which probably forms a ternary complex with the MutSbeta heterodimer that initially recognizes the DNA mismatches. This complex is thought to be responsible for directing the downstream MMR events, including strand discrimination, excision, and resynthesis. Plays a major role in promoting meiotic crossing-over and is involved in maintaining the genetic stability of simple sequence repeats by correction of frameshift intermediates. This is DNA mismatch repair protein MLH3 (MLH3) from Saccharomyces cerevisiae (strain ATCC 204508 / S288c) (Baker's yeast).